A 115-amino-acid polypeptide reads, in one-letter code: Large ribosomal subunit protein bL20 (115 aa).

Belongs to the bacterial ribosomal protein bL20 family.

Its function is as follows. Binds directly to 23S ribosomal RNA and is necessary for the in vitro assembly process of the 50S ribosomal subunit. It is not involved in the protein synthesizing functions of that subunit. The protein is Large ribosomal subunit protein bL20 of Salinibacter ruber (strain DSM 13855 / M31).